Reading from the N-terminus, the 80-residue chain is Beta-toxin KAaH2 (80 aa).

The N-terminal stretch at 1–22 (MMKLMLFSIIVILFSLIGSIHG) is a signal peptide. An LCN-type CS-alpha/beta domain is found at 25–80 (VPGNYPLDSSDDTYLCAPLGENPSCIQICRKHGVKYGYCYAFQCWCEYLEDKNVKI). 3 disulfides stabilise this stretch: Cys-40-Cys-63, Cys-49-Cys-68, and Cys-53-Cys-70.

The protein belongs to the long (3 C-C) scorpion toxin superfamily. Sodium/Potassium channel inhibitor family. In terms of tissue distribution, expressed by the venom gland.

The protein localises to the secreted. Functionally, weakly inhibits the vertebrate potassium channel Kv1.1/KCNA1. The protein is Beta-toxin KAaH2 of Androctonus australis (Sahara scorpion).